Here is a 267-residue protein sequence, read N- to C-terminus: Glucosamine-6-phosphate deaminase (267 aa).

Asp-72 (proton acceptor; for enolization step) is an active-site residue. Asp-141 acts as the For ring-opening step in catalysis. His-143 functions as the Proton acceptor; for ring-opening step in the catalytic mechanism. Glu-148 (for ring-opening step) is an active-site residue.

It belongs to the glucosamine/galactosamine-6-phosphate isomerase family. NagB subfamily. Homohexamer.

It carries out the reaction alpha-D-glucosamine 6-phosphate + H2O = beta-D-fructose 6-phosphate + NH4(+). It functions in the pathway amino-sugar metabolism; N-acetylneuraminate degradation; D-fructose 6-phosphate from N-acetylneuraminate: step 5/5. With respect to regulation, allosterically activated by N-acetylglucosamine 6-phosphate (GlcNAc6P). Functionally, catalyzes the reversible isomerization-deamination of glucosamine 6-phosphate (GlcN6P) to form fructose 6-phosphate (Fru6P) and ammonium ion. The sequence is that of Glucosamine-6-phosphate deaminase from Mannheimia succiniciproducens (strain KCTC 0769BP / MBEL55E).